Reading from the N-terminus, the 1123-residue chain is Leucine-rich repeat receptor-like protein kinase PEPR1 (1123 aa).

A signal peptide spans 1–28; the sequence is MKNLGGLFKILLLFFCLFLSTHIISVSC. Over 29–769 the chain is Extracellular; it reads LNSDGLTLLS…SRKSGLSTWQ (741 aa). The LRR 1 repeat unit spans residues 31-53; the sequence is SDGLTLLSLLKHLDRVPPQVTST. Residues asparagine 57, asparagine 81, asparagine 110, and asparagine 121 are each glycosylated (N-linked (GlcNAc...) asparagine). 7 LRR repeats span residues 74 to 98, 99 to 122, 124 to 145, 146 to 170, 171 to 194, 196 to 218, and 219 to 243; these read SKNV…IGEL, KSLQ…LGNC, KLAT…TLDS, LKRL…LFRI, PKLQ…IGDA, ELVE…IGNS, and SSLQ…NLLG. 2 N-linked (GlcNAc...) asparagine glycosylation sites follow: asparagine 182 and asparagine 217. Residues asparagine 244, asparagine 252, asparagine 289, asparagine 302, asparagine 316, asparagine 321, and asparagine 337 are each glycosylated (N-linked (GlcNAc...) asparagine). 20 LRR repeats span residues 245–266, 267–290, 292–314, 315–338, 340–362, 363–386, 388–410, 412–434, 435–458, 459–482, 484–505, 506–529, 530–553, 554–577, 579–600, 601–625, 626–650, 652–674, 675–696, and 697–721; these read LTTL…SPNC, KNLL…LGNC, SLDA…LGML, KNLT…LGNC, SLNL…LGKL, RKLE…IWKS, SLTQ…MTEM, KLKI…LGVN, SSLE…LCHG, RKLR…IGHC, TIRR…FSQD, HSLS…LGSC, KNLS…LGNL, QNLG…LSNC, SLER…NFSN, WKGL…LPEL, KKLS…GLIE, LIYD…LGDL, IKLT…VLKG, and LTSL…LEGQ. N-linked (GlcNAc...) asparagine glycans are attached at residues asparagine 398, asparagine 420, and asparagine 434. Residue asparagine 494 is glycosylated (N-linked (GlcNAc...) asparagine). N-linked (GlcNAc...) asparagine glycans are attached at residues asparagine 531, asparagine 536, asparagine 560, asparagine 591, and asparagine 597. 2 N-linked (GlcNAc...) asparagine glycosylation sites follow: asparagine 681 and asparagine 686. Asparagine 745 carries an N-linked (GlcNAc...) asparagine glycan. A helical transmembrane segment spans residues 770-790; it reads IVLIAVLSSLLVLVVVLALVF. The Cytoplasmic portion of the chain corresponds to 791–1123; sequence ICLRRRKGRP…ARSCSSDSVR (333 aa). At threonine 824 the chain carries Phosphothreonine. A Protein kinase domain is found at 827-1115; that stretch reads LNEKYTIGRG…LLEDVKHLAR (289 aa). ATP is bound by residues 833–841 and lysine 855; that span reads IGRGAHGIV. Phosphotyrosine occurs at positions 901 and 941. Aspartate 954 (proton acceptor) is an active-site residue. Phosphotyrosine is present on tyrosine 995.

This sequence belongs to the protein kinase superfamily. Ser/Thr protein kinase family. Interacts with PEP1 and BAK1. Interacts with BIK1 and PBL1. N-glycosylated.

It localises to the cell membrane. It carries out the reaction L-seryl-[protein] + ATP = O-phospho-L-seryl-[protein] + ADP + H(+). It catalyses the reaction L-threonyl-[protein] + ATP = O-phospho-L-threonyl-[protein] + ADP + H(+). In terms of biological role, acts as a receptor for PEP defense peptides. Unlike typical immune receptors, senses an endogenous elicitor that potentiates pathogen-associated molecular pattern (PAMP)-inducible plant responses. Involved in PAMP-triggered immunity (PTI) signaling. Interacts with and phosphorylates the kinase BIK1, a central rate-limiting kinase in PTI signaling. In Arabidopsis thaliana (Mouse-ear cress), this protein is Leucine-rich repeat receptor-like protein kinase PEPR1 (PEPR1).